Consider the following 178-residue polypeptide: Acireductone dioxygenase (178 aa).

4 residues coordinate Fe(2+): histidine 87, histidine 89, glutamate 93, and histidine 132. The Ni(2+) site is built by histidine 87, histidine 89, glutamate 93, and histidine 132.

This sequence belongs to the acireductone dioxygenase (ARD) family. Fe(2+) serves as cofactor. It depends on Ni(2+) as a cofactor.

It is found in the cytoplasm. Its subcellular location is the nucleus. It carries out the reaction 1,2-dihydroxy-5-(methylsulfanyl)pent-1-en-3-one + O2 = 4-methylsulfanyl-2-oxobutanoate + formate + 2 H(+). The catalysed reaction is 1,2-dihydroxy-5-(methylsulfanyl)pent-1-en-3-one + O2 = 3-(methylsulfanyl)propanoate + CO + formate + 2 H(+). It functions in the pathway amino-acid biosynthesis; L-methionine biosynthesis via salvage pathway; L-methionine from S-methyl-5-thio-alpha-D-ribose 1-phosphate: step 5/6. Functionally, catalyzes 2 different reactions between oxygen and the acireductone 1,2-dihydroxy-3-keto-5-methylthiopentene (DHK-MTPene) depending upon the metal bound in the active site. Fe-containing acireductone dioxygenase (Fe-ARD) produces formate and 2-keto-4-methylthiobutyrate (KMTB), the alpha-ketoacid precursor of methionine in the methionine recycle pathway. Ni-containing acireductone dioxygenase (Ni-ARD) produces methylthiopropionate, carbon monoxide and formate, and does not lie on the methionine recycle pathway. In Candida albicans (strain SC5314 / ATCC MYA-2876) (Yeast), this protein is Acireductone dioxygenase.